The primary structure comprises 251 residues: tRNA pseudouridine synthase A (251 aa).

Catalysis depends on D26, which acts as the Nucleophile. Position 98 (Y98) interacts with substrate.

This sequence belongs to the tRNA pseudouridine synthase TruA family. Homodimer.

The enzyme catalyses uridine(38/39/40) in tRNA = pseudouridine(38/39/40) in tRNA. Functionally, formation of pseudouridine at positions 38, 39 and 40 in the anticodon stem and loop of transfer RNAs. The polypeptide is tRNA pseudouridine synthase A (Mycolicibacterium paratuberculosis (strain ATCC BAA-968 / K-10) (Mycobacterium paratuberculosis)).